Here is a 435-residue protein sequence, read N- to C-terminus: Gamma-glutamyl phosphate reductase (435 aa).

This sequence belongs to the gamma-glutamyl phosphate reductase family.

It is found in the cytoplasm. It carries out the reaction L-glutamate 5-semialdehyde + phosphate + NADP(+) = L-glutamyl 5-phosphate + NADPH + H(+). Its pathway is amino-acid biosynthesis; L-proline biosynthesis; L-glutamate 5-semialdehyde from L-glutamate: step 2/2. Its function is as follows. Catalyzes the NADPH-dependent reduction of L-glutamate 5-phosphate into L-glutamate 5-semialdehyde and phosphate. The product spontaneously undergoes cyclization to form 1-pyrroline-5-carboxylate. In Aquifex aeolicus (strain VF5), this protein is Gamma-glutamyl phosphate reductase.